Here is a 203-residue protein sequence, read N- to C-terminus: Endo-type membrane-bound lytic murein transglycosylase A (203 aa).

Residues 1 to 15 (MKLRWLLILVVFLAG) form the signal peptide. C16 carries the N-palmitoyl cysteine lipid modification. A lipid anchor (S-diacylglycerol cysteine) is attached at C16.

Belongs to the transglycosylase Slt family.

Its subcellular location is the cell outer membrane. It carries out the reaction Endolytic cleavage of the (1-&gt;4)-beta-glycosidic linkage between N-acetylmuramic acid (MurNAc) and N-acetylglucosamine (GlcNAc) residues in peptidoglycan with concomitant formation of a 1,6-anhydrobond in the MurNAc residue.. In terms of biological role, murein-degrading enzyme. May play a role in recycling of muropeptides during cell elongation and/or cell division. Preferentially cleaves at a distance of more than two disaccharide units from the ends of the glycan chain. The polypeptide is Endo-type membrane-bound lytic murein transglycosylase A (Klebsiella pneumoniae (strain 342)).